Here is a 172-residue protein sequence, read N- to C-terminus: Large ribosomal subunit protein uL10 (172 aa).

This sequence belongs to the universal ribosomal protein uL10 family. Part of the ribosomal stalk of the 50S ribosomal subunit. The N-terminus interacts with L11 and the large rRNA to form the base of the stalk. The C-terminus forms an elongated spine to which L12 dimers bind in a sequential fashion forming a multimeric L10(L12)X complex.

Forms part of the ribosomal stalk, playing a central role in the interaction of the ribosome with GTP-bound translation factors. The chain is Large ribosomal subunit protein uL10 from Bartonella bacilliformis (strain ATCC 35685 / KC583 / Herrer 020/F12,63).